A 763-amino-acid chain; its full sequence is Pentatricopeptide repeat-containing protein At4g32430, mitochondrial (763 aa).

A mitochondrion-targeting transit peptide spans 1–38 (MTLLNYLHCNRSKSFLFQRFYSPYRIAHKLFDGSSQRN). PPR repeat units follow at residues 77-109 (DEVT…GFTS), 110-140 (FVCV…LVDP), 141-172 (DVVS…GVVF), 173-207 (DAFT…GLES), 208-238 (DLVV…MSFK), 239-274 (DMIS…GVEL), 275-309 (DHVS…GYES), 310-344 (LLEV…NVVS), 350-370 (SSNK…GVYP), 371-405 (NEVT…GFVS), 406-436 (EPSV…ITFR), 437-471 (EIIS…TMPN), 472-507 (EYTF…GLNS), 508-538 (CPVV…MSQK), 539-573 (NQFV…NVAP), 574-604 (DLVT…MIEV), and 610-640 (SHEH…VPGG). A type E motif region spans residues 645 to 720 (MLQSMLGSCR…EAGFSWIDVG (76 aa)). A type E(+) motif region spans residues 724-756 (GSLTMQGFSSGDKSHPKSDEIYRMVEIIGLEMN).

Belongs to the PPR family. PCMP-E subfamily.

It is found in the mitochondrion. The chain is Pentatricopeptide repeat-containing protein At4g32430, mitochondrial (PCMP-E40) from Arabidopsis thaliana (Mouse-ear cress).